We begin with the raw amino-acid sequence, 944 residues long: MDKKSFEMVLDEIRKAVLTEYKLKAIEYVHGYFSSEQVVDLLRYFSWAEPQLKAMKALQHKMVAVQPTEVVNILNCFTFSKDKLVALELLASNIIDAQNSRPIEDLFRVNMSEKKRCKRILEQAFKGGCKAPHAMISSCGTIPGNPYPKGRPSRINGIFPGTPLKKDGEECTNEGKGIAARILGPSKPPPSTYNPHKPVPYPIPPCRPHATIAPSAYNNAGLVPLANVIAPPPPPYTPNPVGTENEDLSNPSKPIQNQTFSTPASQLFSPHGSNPSTPAATPVPTASPVKAINHPSASAAATVSGMNLLNTVLPVFPGQVSSAVHTPQPSIPNPTVIRTPSLPTAPVTSIHSTTTTPVPSIFSGLVSLPGPSATPTAATPTPGPTPRSTLGSSEAFASTSAPFTSLPFSTSSSAASTSNPNSASLSSVFAGLPLPLPPTSQGLSNPTPVIAGGSTPSVAGPLGVNSPLLSALKGFLTSNDTNLINSSALSSAVTSGLASLSSLTLQNSDSSASAPNKCYAPSAIPTPQRTSTPGLALFPGLPSPVANSTSTPLTLPVQSPLATAASASTSVPVSCGSSASLLRGPHPGTSDLHISSTPAATTLPVMIKTEPTSPTPSAFKGPSHSGNPSHGTLGLSGTLGRAYTSTSVPISLSACLNPALSGLSSLSTPLNGSNPLSSISLPPHGSSTPIAPVFTALPSFTSLTNNFPLTGNPSLNPSVSLPGSLIATSSTAATSTSLPHPSSTAAVLSGLSASAPVSAAPFPLNLSTAVPSLFSVTQGPLSSSNPSYPGFSVSNTPSVTPALPSFPGLQAPSTVAAVTPLPVAATAPSPAPVLPGFASAFSSNFNSALVAQAGLSSGLQAAGSSVFPGLLSLPGIPGFPQNPSQSSLQELQHNAAAQSALLQQVHSASALESYPAQPDGFPSYPSAPGTPFSLQPSLSQSGWQ.

Residue M1 is modified to N-acetylmethionine. Disordered stretches follow at residues 233–285 (PPPY…PVPT), 369–396 (PGPSATPTAATPTPGPTPRSTLGSSEAF), 608–633 (KTEPTSPTPSAFKGPSHSGNPSHGTL), and 912–944 (ESYPAQPDGFPSYPSAPGTPFSLQPSLSQSGWQ). Residues 248-274 (LSNPSKPIQNQTFSTPASQLFSPHGSN) show a composition bias toward polar residues. Residues 275–285 (PSTPAATPVPT) show a composition bias toward low complexity. Residues 932–944 (FSLQPSLSQSGWQ) are compositionally biased toward polar residues.

Interacts with TET2 and OGT; this interaction mediates TET2 O-GlcNAcylation and stability by promoting the interaction between OGT and TET2. Interacts with KDM6A. Interacts with TET1. Glycosylated. Interaction with OGT leads to GlcNAcylation.

Functionally, mediates OGT interaction with and O-GlcNAcylation of TET2 to control TET2 stabilization at enhancers and CpG islands (CGIs). The polypeptide is Proline and serine-rich protein 1 (Homo sapiens (Human)).